The primary structure comprises 1012 residues: RAS protein activator like-3 (1012 aa).

Disordered regions lie at residues 1 to 128 (MDPP…TPDV), 147 to 196 (GNED…QIHN), and 208 to 229 (KKAK…ALGS). Over residues 7-21 (SRASQTQPVAPSPLT) the composition is skewed to polar residues. Ser-18 is modified (phosphoserine). Over residues 27 to 39 (SGGGAEKGAGGFR) the composition is skewed to gly residues. Polar residues predominate over residues 50–62 (QSHQETTASSQPA). Residue Ser-51 is modified to Phosphoserine. The span at 100 to 113 (SEPEPENPEPEPEL) shows a compositional bias: acidic residues. 4 positions are modified to phosphoserine: Ser-160, Ser-162, Ser-163, and Ser-166. Over residues 160–171 (SASSESSIHVAS) the composition is skewed to low complexity. Positions 175-186 (KDPDRTPGKTDP) are enriched in basic and acidic residues. The PH domain occupies 193–294 (QIHNVRGLLK…WIEDLRRHFQ (102 aa)). Phosphoserine occurs at positions 212, 225, 229, and 232. Thr-235 carries the phosphothreonine modification. A C2 domain is found at 285 to 405 (WIEDLRRHFQ…APAAGLERWF (121 aa)). A Ras-GAP domain is found at 475 to 683 (GRAQALVTDL…PAMQHFLDQV (209 aa)). Positions 752-887 (PAPRTQGHSS…DKDQALGTHR (136 aa)) are disordered. Phosphoserine occurs at positions 788 and 791. Positions 826-841 (PARRRPSAGPRPRPKG) are enriched in basic residues. Residues 889 to 989 (VGKLAELQCE…KDTIQNLQLL (101 aa)) are a coiled coil. The segment covering 990–999 (PRTSESQSQP) has biased composition (polar residues). The tract at residues 990 to 1012 (PRTSESQSQPVPLKAPCINGDTT) is disordered.

Its subcellular location is the cytoplasm. It localises to the cell cortex. Functions as a Ras GTPase-activating protein. Plays an important role in the expansion and functions of natural killer T (NKT) cells in the liver by negatively regulating RAS activity and the down-stream ERK signaling pathway. The polypeptide is RAS protein activator like-3 (RASAL3) (Bos taurus (Bovine)).